Here is a 98-residue protein sequence, read N- to C-terminus: NADH-ubiquinone oxidoreductase chain 4L (98 aa).

3 consecutive transmembrane segments (helical) span residues 1 to 21 (MSLV…GLLM), 29 to 49 (SLLC…IMIL), and 61 to 81 (IILL…LVMV).

The protein belongs to the complex I subunit 4L family. As to quaternary structure, core subunit of respiratory chain NADH dehydrogenase (Complex I) which is composed of 45 different subunits.

The protein resides in the mitochondrion inner membrane. The enzyme catalyses a ubiquinone + NADH + 5 H(+)(in) = a ubiquinol + NAD(+) + 4 H(+)(out). Functionally, core subunit of the mitochondrial membrane respiratory chain NADH dehydrogenase (Complex I) which catalyzes electron transfer from NADH through the respiratory chain, using ubiquinone as an electron acceptor. Part of the enzyme membrane arm which is embedded in the lipid bilayer and involved in proton translocation. The sequence is that of NADH-ubiquinone oxidoreductase chain 4L (MT-ND4L) from Sorex unguiculatus (Long-clawed shrew).